The primary structure comprises 221 residues: Cytidylate kinase (221 aa).

An ATP-binding site is contributed by 7 to 15 (GPSASGKSS).

This sequence belongs to the cytidylate kinase family. Type 1 subfamily.

The protein resides in the cytoplasm. The enzyme catalyses CMP + ATP = CDP + ADP. The catalysed reaction is dCMP + ATP = dCDP + ADP. The chain is Cytidylate kinase from Borreliella burgdorferi (strain ZS7) (Borrelia burgdorferi).